The following is a 324-amino-acid chain: Beta-ketoacyl-[acyl-carrier-protein] synthase III (324 aa).

Catalysis depends on residues cysteine 112 and histidine 249. The ACP-binding stretch occupies residues 250-254 (QANRR). Residue asparagine 279 is part of the active site.

It belongs to the thiolase-like superfamily. FabH family. Homodimer.

The protein resides in the cytoplasm. It carries out the reaction malonyl-[ACP] + acetyl-CoA + H(+) = 3-oxobutanoyl-[ACP] + CO2 + CoA. It functions in the pathway lipid metabolism; fatty acid biosynthesis. Functionally, catalyzes the condensation reaction of fatty acid synthesis by the addition to an acyl acceptor of two carbons from malonyl-ACP. Catalyzes the first condensation reaction which initiates fatty acid synthesis and may therefore play a role in governing the total rate of fatty acid production. Possesses both acetoacetyl-ACP synthase and acetyl transacylase activities. Its substrate specificity determines the biosynthesis of branched-chain and/or straight-chain of fatty acids. The sequence is that of Beta-ketoacyl-[acyl-carrier-protein] synthase III from Streptococcus pyogenes serotype M49 (strain NZ131).